The primary structure comprises 457 residues: Flavohemoprotein-2 (457 aa).

A Globin domain is found at 2–157; sequence ALSEDTIKAV…LADLLIKREE (156 aa). A heme b-binding site is contributed by H106. Catalysis depends on charge relay system residues Y116 and E156. Residues 168-456 form a reductase region; the sequence is GGWRQTRTFR…FEMFGPFKAS (289 aa). Residues 171–278 form the FAD-binding FR-type domain; the sequence is RQTRTFRVEE…APPYGDFFLR (108 aa). Residues Y210 and 227-230 contribute to the FAD site; that span reads RQYS. Residue 320 to 325 participates in NADP(+) binding; sequence GIGQTP. 449–452 lines the FAD pocket; it reads MFGP.

The protein belongs to the globin family. Two-domain flavohemoproteins subfamily. In the C-terminal section; belongs to the flavoprotein pyridine nucleotide cytochrome reductase family. In terms of assembly, monomer. It depends on heme b as a cofactor. Requires FAD as cofactor.

The enzyme catalyses 2 nitric oxide + NADPH + 2 O2 = 2 nitrate + NADP(+) + H(+). It catalyses the reaction 2 nitric oxide + NADH + 2 O2 = 2 nitrate + NAD(+) + H(+). Its function is as follows. Flavohemoprotein involved in nitric oxide (NO) detoxification in an aerobic process, termed nitric oxide dioxygenase (NOD) reaction that utilizes O(2) and NAD(P)H to convert NO to nitrate, which protects the protozoan parasite from various noxious nitrogen compounds. Therefore, plays a central role in the inducible response to nitrosative stress. May also be involved in O(2) detoxification. The chain is Flavohemoprotein-2 (hmpA-2) from Giardia intestinalis (strain P15) (Giardia lamblia).